The primary structure comprises 252 residues: 2-succinyl-6-hydroxy-2,4-cyclohexadiene-1-carboxylate synthase (252 aa).

It belongs to the AB hydrolase superfamily. MenH family. In terms of assembly, monomer.

The catalysed reaction is 5-enolpyruvoyl-6-hydroxy-2-succinyl-cyclohex-3-ene-1-carboxylate = (1R,6R)-6-hydroxy-2-succinyl-cyclohexa-2,4-diene-1-carboxylate + pyruvate. The protein operates within quinol/quinone metabolism; 1,4-dihydroxy-2-naphthoate biosynthesis; 1,4-dihydroxy-2-naphthoate from chorismate: step 3/7. Its pathway is quinol/quinone metabolism; menaquinone biosynthesis. Its function is as follows. Catalyzes a proton abstraction reaction that results in 2,5-elimination of pyruvate from 2-succinyl-5-enolpyruvyl-6-hydroxy-3-cyclohexene-1-carboxylate (SEPHCHC) and the formation of 2-succinyl-6-hydroxy-2,4-cyclohexadiene-1-carboxylate (SHCHC). This chain is 2-succinyl-6-hydroxy-2,4-cyclohexadiene-1-carboxylate synthase, found in Escherichia coli O81 (strain ED1a).